Consider the following 560-residue polypeptide: Nuclear receptor subfamily 5 group A member 2 (560 aa).

The disordered stretch occupies residues Gly-17–Ile-54. Over residues His-31–Asp-48 the composition is skewed to basic and acidic residues. The segment at residues Glu-104–Ala-179 is a DNA-binding region (nuclear receptor). Zn(2+)-binding residues include Cys-107, Cys-110, Cys-124, Cys-127, Cys-143, Cys-149, Cys-159, and Cys-162. 2 consecutive NR C4-type zinc fingers follow at residues Cys-107–Cys-127 and Cys-143–Cys-162. The interval Lys-173–Lys-188 is C-terminal extension (CTE). Residues Phe-189–Arg-208 carry the FTZ-F1 box motif. Lys-289 participates in a covalent cross-link: Glycyl lysine isopeptide (Lys-Gly) (interchain with G-Cter in SUMO1). Residues Ser-319–Lys-558 enclose the NR LBD domain. A phospholipid derivative is bound by residues Tyr-535 and Lys-539. An AF-2 region spans residues Tyr-547–Lys-558.

Belongs to the nuclear hormone receptor family. NR5 subfamily. In terms of assembly, monomer; Binds DNA as a monomer. Interacts with nuclear receptor corepressors NR0B1 and NR0B2; repressing NR5A2 nuclear receptor activity. Interacts with nuclear receptor coactivators CTNNB1, PPARGC1A and NCOA2; interaction takes place following ligand-binding and promotes target gene activation. Interacts (when sumoylated) with GPS2; interaction with GPS2 onto hepatic acute phase protein promoters prevents N-Cor corepressor complex dissociation. Interacts with HNF1A. Interacts with GRIP1. In terms of processing, sumoylated by SUMO1 at Lys-289 during the hepatic acute phase response, leading to promote interaction with GPS2 and prevent N-Cor corepressor complex dissociation.

Its subcellular location is the nucleus. The protein localises to the chromosome. In terms of biological role, orphan nuclear receptor that binds DNA as a monomer to the 5'-TCAAGGCCA-3' sequence and controls expression of target genes: regulates key biological processes, such as early embryonic development, cholesterol and bile acid synthesis pathways, as well as liver and pancreas morphogenesis. Ligand-binding causes conformational change which causes recruitment of coactivators, promoting target gene activation. The specific ligand is unknown, but specific phospholipids, such as phosphatidylethanolamine, phosphatidylserine, dilauroyl phosphatidylcholine and diundecanoyl phosphatidylcholine can act as ligand in vitro. Acts as a pioneer transcription factor, which unwraps target DNA from histones and elicits local opening of closed chromatin. Plays a central role during preimplantation stages of embryonic development. Plays a minor role in zygotic genome activation (ZGA) by regulating a small set of two-cell stage genes. Plays a major role in morula development (2-16 cells embryos) by acting as a master regulator at the 8-cell stage, controlling expression of lineage-specifying transcription factors and genes involved in mitosis, telomere maintenance and DNA repair. Zygotic NR5A2 binds to both closed and open chromatin with other transcription factors, often at SINE B1/Alu repeats DNA elements, promoting chromatin accessibility at nearby regulatory regions. Also involved in the epiblast stage of development and embryonic stem cell pluripotency, by promoting expression of POU5F1/OCT4. Regulates other processes later in development, such as formation of connective tissue in lower jaw and middle ear, neural stem cell differentiation, ovarian follicle development and Sertoli cell differentiation. Involved in exocrine pancreas development and acinar cell differentiation. Acts as an essential transcriptional regulator of lipid metabolism. Key regulator of cholesterol 7-alpha-hydroxylase gene (CYP7A) expression in liver. Also acts as a negative regulator of inflammation in different organs, such as, liver and pancreas. Protects against intestinal inflammation via its ability to regulate glucocorticoid production. Plays an anti-inflammatory role during the hepatic acute phase response by acting as a corepressor: inhibits the hepatic acute phase response by preventing dissociation of the N-Cor corepressor complex. Acts as a regulator of immunity by promoting lymphocyte T-cell development, proliferation and effector functions. Also involved in resolution of endoplasmic reticulum stress in the liver. In Rattus norvegicus (Rat), this protein is Nuclear receptor subfamily 5 group A member 2.